The following is an 81-amino-acid chain: ATP synthase subunit C, plastid (81 aa).

Helical transmembrane passes span P3–G23 and E61–I81.

It belongs to the ATPase C chain family. F-type ATPases have 2 components, F(1) - the catalytic core - and F(0) - the membrane proton channel. F(1) has five subunits: alpha(3), beta(3), gamma(1), delta(1), epsilon(1). F(0) has four main subunits: a(1), b(1), b'(1) and c(10-14). The alpha and beta chains form an alternating ring which encloses part of the gamma chain. F(1) is attached to F(0) by a central stalk formed by the gamma and epsilon chains, while a peripheral stalk is formed by the delta, b and b' chains.

The protein resides in the plastid membrane. Functionally, f(1)F(0) ATP synthase produces ATP from ADP in the presence of a proton or sodium gradient. F-type ATPases consist of two structural domains, F(1) containing the extramembraneous catalytic core and F(0) containing the membrane proton channel, linked together by a central stalk and a peripheral stalk. During catalysis, ATP synthesis in the catalytic domain of F(1) is coupled via a rotary mechanism of the central stalk subunits to proton translocation. Its function is as follows. Key component of the F(0) channel; it plays a direct role in translocation across the membrane. A homomeric c-ring of between 10-14 subunits forms the central stalk rotor element with the F(1) delta and epsilon subunits. This Aneura mirabilis (Parasitic liverwort) protein is ATP synthase subunit C, plastid.